A 642-amino-acid chain; its full sequence is Chaperone protein HtpG (642 aa).

Residues 1-348 (MSTKIEQLEF…AQDLSLNVSR (348 aa)) are a; substrate-binding. Positions 349–564 (EILQQDRQIR…AFSMSPALER (216 aa)) are b. The tract at residues 565 to 642 (MYRASGQPVP…MLANRLARTV (78 aa)) is c.

It belongs to the heat shock protein 90 family. Homodimer.

The protein localises to the cytoplasm. In terms of biological role, molecular chaperone. Has ATPase activity. This is Chaperone protein HtpG from Rhodococcus jostii (strain RHA1).